Reading from the N-terminus, the 155-residue chain is 3-hydroxyacyl-[acyl-carrier-protein] dehydratase FabZ (155 aa).

The active site involves His-57.

The protein belongs to the thioester dehydratase family. FabZ subfamily.

The protein localises to the cytoplasm. The enzyme catalyses a (3R)-hydroxyacyl-[ACP] = a (2E)-enoyl-[ACP] + H2O. Involved in unsaturated fatty acids biosynthesis. Catalyzes the dehydration of short chain beta-hydroxyacyl-ACPs and long chain saturated and unsaturated beta-hydroxyacyl-ACPs. The chain is 3-hydroxyacyl-[acyl-carrier-protein] dehydratase FabZ from Cereibacter sphaeroides (strain KD131 / KCTC 12085) (Rhodobacter sphaeroides).